The following is a 429-amino-acid chain: GTPase Obg (429 aa).

An Obg domain is found at Met1 to Leu158. A disordered region spans residues Arg124–Pro145. The OBG-type G domain maps to Ala159–Glu329. GTP is bound by residues Gly165–Ser172, Phe190–Val194, Asp212–Gly215, Asn282–Asp285, and Ser310–Val312. Positions 172 and 192 each coordinate Mg(2+). One can recognise an OCT domain in the interval Lys351–Asp429.

It belongs to the TRAFAC class OBG-HflX-like GTPase superfamily. OBG GTPase family. As to quaternary structure, monomer. The cofactor is Mg(2+).

It localises to the cytoplasm. In terms of biological role, an essential GTPase which binds GTP, GDP and possibly (p)ppGpp with moderate affinity, with high nucleotide exchange rates and a fairly low GTP hydrolysis rate. Plays a role in control of the cell cycle, stress response, ribosome biogenesis and in those bacteria that undergo differentiation, in morphogenesis control. The polypeptide is GTPase Obg (Listeria monocytogenes serotype 4b (strain F2365)).